We begin with the raw amino-acid sequence, 524 residues long: D-3-phosphoglycerate dehydrogenase (524 aa).

NAD(+)-binding positions include 149–150 (RI), aspartate 169, 229–231 (CAR), and aspartate 255. Arginine 231 is an active-site residue. Glutamate 260 is a catalytic residue. The active-site Proton donor is the histidine 278. NAD(+) is bound at residue 278–281 (HQGA). One can recognise an ACT domain in the interval 452–524 (LAIIKHIDRP…NIKDVAVINL (73 aa)).

It belongs to the D-isomer specific 2-hydroxyacid dehydrogenase family.

The enzyme catalyses (2R)-3-phosphoglycerate + NAD(+) = 3-phosphooxypyruvate + NADH + H(+). It participates in amino-acid biosynthesis; L-serine biosynthesis; L-serine from 3-phospho-D-glycerate: step 1/3. The protein is D-3-phosphoglycerate dehydrogenase (serA) of Methanocaldococcus jannaschii (strain ATCC 43067 / DSM 2661 / JAL-1 / JCM 10045 / NBRC 100440) (Methanococcus jannaschii).